The sequence spans 875 residues: Cytosolic phospholipase A2 epsilon (875 aa).

Positions 16–70 (THASEGHHGLGTSMLVPKNPQGEEDSKLGRNCSGFEDAQDPQTAVPSSPLLSMAS) are disordered. In terms of domain architecture, C2 spans 60-183 (VPSSPLLSMA…CLRNKTHVKF (124 aa)). Low complexity predominate over residues 61–70 (PSSPLLSMAS). Ca(2+) is bound by residues aspartate 97, aspartate 103, aspartate 153, aspartate 155, and aspartate 161. Residues 332–875 (PCSDTLDVRL…KKRMRSQCPS (544 aa)) form the PLA2c domain. Catalysis depends on serine 420, which acts as the Nucleophile. Aspartate 708 functions as the Proton acceptor in the catalytic mechanism. The residue at position 808 (serine 808) is a Phosphoserine. Residues 865–875 (EKKRMRSQCPS) form a required for localization at membrane structures region.

The cofactor is Ca(2+). As to expression, predominantly expressed in brain, heart, skeletal muscle, testis and thyroid. Expressed in neurons but not astrocytes or microglia. Expressed at lower level in stomach.

The protein localises to the cytoplasm. The protein resides in the cytosol. Its subcellular location is the early endosome membrane. It is found in the lysosome membrane. It localises to the cell membrane. It catalyses the reaction a 1,2-diacyl-sn-glycero-3-phosphoethanolamine + a 1,2-diacyl-sn-glycero-3-phosphocholine = an N-acyl-1,2-diacyl-sn-glycero-3-phosphoethanolamine + a 2-acyl-sn-glycero-3-phosphocholine + H(+). The enzyme catalyses 1-hexadecanoyl-2-octadecanoyl-sn-glycero-3-phosphocholine + 1,2-di-(9Z-octadecenoyl)-sn-glycero-3-phosphoethanolamine = 2-octadecanoyl-sn-glycero-3-phosphocholine + N-hexadecanoyl-1,2-di-(9Z-octadecenoyl)-sn-glycero-3-phosphoethanolamine + H(+). It carries out the reaction 1-octadecanoyl-2-hexadecanoyl-sn-glycero-3-phosphocholine + 1,2-di-(9Z-octadecenoyl)-sn-glycero-3-phosphoethanolamine = N-octadecanoyl-1,2-di-(9Z-octadecenoyl)-sn-glycero-3-phosphoethanolamine + 2-hexadecanoyl-sn-glycero-3-phosphocholine + H(+). The catalysed reaction is 1,2-di-(9Z-octadecenoyl)-sn-glycero-3-phosphoethanolamine + 1,2-dihexadecanoyl-sn-glycero-3-phosphocholine = N-hexadecanoyl-1,2-di-(9Z-octadecenoyl)-sn-glycero-3-phosphoethanolamine + 2-hexadecanoyl-sn-glycero-3-phosphocholine + H(+). It catalyses the reaction 1,2-di-(5Z,8Z,11Z,14Z-eicosatetraenoyl)-sn-glycero-3-phosphocholine + 1,2-di-(9Z-octadecenoyl)-sn-glycero-3-phosphoethanolamine = N-(5Z,8Z,11Z,14Z-eicosatetraenoyl)-1,2-di-(9Z-octadecenoyl)-sn-glycero-3-phosphoethanolamine + 2-(5Z,8Z,11Z,14Z)-eicosatetraenoyl-sn-glycero-3-phosphocholine + H(+). The enzyme catalyses 2 1,2-di-(9Z-octadecenoyl)-sn-glycero-3-phosphoethanolamine = N,1,2-tri-(9Z-octadecenoyl)-sn-glycero-3-phosphoethanolamine + 2-(9Z-octadecenoyl)-sn-glycero-3-phosphoethanolamine + H(+). It carries out the reaction a 1,2-diacyl-sn-glycero-3-phosphocholine + H2O = a 1-acyl-sn-glycero-3-phosphocholine + a fatty acid + H(+). The catalysed reaction is 1-(1Z-octadecenyl)-2-(9Z-octadecenoyl)-sn-glycero-3-phosphoethanolamine + 1,2-dihexadecanoyl-sn-glycero-3-phosphocholine = 1-O-(1Z-octadecenoyl)-2-(9Z-octadecenoyl)-sn-glycero-3-phospho-N-hexadecanoyl-ethanolamine + 2-hexadecanoyl-sn-glycero-3-phosphocholine + H(+). It catalyses the reaction 1-hexadecanoyl-2-(5Z,8Z,11Z,14Z-eicosatetraenoyl)-sn-glycero-3-phosphocholine + H2O = 1-hexadecanoyl-sn-glycero-3-phosphocholine + (5Z,8Z,11Z,14Z)-eicosatetraenoate + H(+). The enzyme catalyses 1-hexadecanoyl-sn-glycero-3-phosphocholine + H2O = sn-glycerol 3-phosphocholine + hexadecanoate + H(+). Stimulated by cytosolic Ca(2+). Stimulated by anionic phospholipids such as phosphatidylserine. Functionally, calcium-dependent N-acyltransferase involved in the biosynthesis of N-acyl ethanolamines (NAEs) in the brain. Transfers the sn-1 fatty acyl chain of phosphatidylcholine (fatty acyl donor) to the amine group of phosphatidylethanolamine (fatty acyl acceptor) to generate N-acyl phosphatidylethanolamine (NAPE). Similarly can use plasmenylethanolamine as a fatty acyl acceptor to form N-acyl plasmenylethanolamine (N-Acyl-PlsEt). Both NAPE and N-Acyl-PlsEt can serve as precursors of bioactive NAEs like N-arachidonoyl phosphatidylethanolamine also called anandamide. Has weak phospholipase A2 and lysophospholipase activities. Regulates intracellular membrane trafficking that requires modulation of membrane curvature as it occurs by enrichment in lysophospholipids. Promotes tubule formation involved in clathrin-independent endocytotic trafficking and cargo recycling. The polypeptide is Cytosolic phospholipase A2 epsilon (Pla2g4e) (Mus musculus (Mouse)).